The sequence spans 146 residues: Myoglobin (146 aa).

The 140-residue stretch at 2 to 141 folds into the Globin domain; that stretch reads GDFDMVLKFW…IIADIDATYK (140 aa). His60 provides a ligand contact to nitrite. His60 provides a ligand contact to O2. His89 is a heme b binding site.

This sequence belongs to the globin family. As to quaternary structure, monomeric.

It is found in the cytoplasm. Its subcellular location is the sarcoplasm. The enzyme catalyses Fe(III)-heme b-[protein] + nitric oxide + H2O = Fe(II)-heme b-[protein] + nitrite + 2 H(+). It catalyses the reaction H2O2 + AH2 = A + 2 H2O. In terms of biological role, monomeric heme protein which primary function is to store oxygen and facilitate its diffusion within muscle tissues. Reversibly binds oxygen through a pentacoordinated heme iron and enables its timely and efficient release as needed during periods of heightened demand. Depending on the oxidative conditions of tissues and cells, and in addition to its ability to bind oxygen, it also has a nitrite reductase activity whereby it regulates the production of bioactive nitric oxide. Under stress conditions, like hypoxia and anoxia, it also protects cells against reactive oxygen species thanks to its pseudoperoxidase activity. The protein is Myoglobin (mb) of Tetraodon nigroviridis (Spotted green pufferfish).